Consider the following 278-residue polypeptide: Phosphonates import ATP-binding protein PhnC (278 aa).

Positions 25-273 constitute an ABC transporter domain; sequence LAVKGLVKAY…IIQDIYSDES (249 aa). 58–65 contributes to the ATP binding site; it reads GRSGAGKS.

This sequence belongs to the ABC transporter superfamily. Phosphonates importer (TC 3.A.1.9.1) family. As to quaternary structure, the complex is composed of two ATP-binding proteins (PhnC), two transmembrane proteins (PhnE) and a solute-binding protein (PhnD).

It is found in the cell inner membrane. The enzyme catalyses phosphonate(out) + ATP + H2O = phosphonate(in) + ADP + phosphate + H(+). Its function is as follows. Part of the ABC transporter complex PhnCDE involved in phosphonates import. Responsible for energy coupling to the transport system. The sequence is that of Phosphonates import ATP-binding protein PhnC from Yersinia pestis bv. Antiqua (strain Antiqua).